Here is a 377-residue protein sequence, read N- to C-terminus: Lipoyl synthase, mitochondrial (377 aa).

Residues Cys-98, Cys-103, Cys-109, Cys-128, Cys-132, Cys-135, and Ser-343 each coordinate [4Fe-4S] cluster. Positions 113 to 332 (KKSEATATIM…RDTALDMGFL (220 aa)) constitute a Radical SAM core domain.

The protein belongs to the radical SAM superfamily. Lipoyl synthase family. The cofactor is [4Fe-4S] cluster.

It localises to the mitochondrion. The enzyme catalyses [[Fe-S] cluster scaffold protein carrying a second [4Fe-4S](2+) cluster] + N(6)-octanoyl-L-lysyl-[protein] + 2 oxidized [2Fe-2S]-[ferredoxin] + 2 S-adenosyl-L-methionine + 4 H(+) = [[Fe-S] cluster scaffold protein] + N(6)-[(R)-dihydrolipoyl]-L-lysyl-[protein] + 4 Fe(3+) + 2 hydrogen sulfide + 2 5'-deoxyadenosine + 2 L-methionine + 2 reduced [2Fe-2S]-[ferredoxin]. Its pathway is protein modification; protein lipoylation via endogenous pathway; protein N(6)-(lipoyl)lysine from octanoyl-[acyl-carrier-protein]: step 2/2. Its function is as follows. Catalyzes the radical-mediated insertion of two sulfur atoms into the C-6 and C-8 positions of the octanoyl moiety bound to the lipoyl domains of lipoate-dependent enzymes, thereby converting the octanoylated domains into lipoylated derivatives. This Candida tropicalis (strain ATCC MYA-3404 / T1) (Yeast) protein is Lipoyl synthase, mitochondrial.